The primary structure comprises 582 residues: External alternative NAD(P)H-ubiquinone oxidoreductase B4, mitochondrial (582 aa).

Residues 1 to 39 constitute a mitochondrion transit peptide; the sequence is MSFHSFYQRASSLFKAYPSTSKILLLSTFSGGGGVLVYS. 65–95 contacts FAD; it reads KVVVLGSGWSGYSFLSYLNNPNYDVQVVSPR. Position 227 to 263 (227 to 263) interacts with NAD(+); sequence LHFVVVGGGPTGVEFSAELHDFLVQDVAKIYPKVQEF. An EF-hand domain is found at 384-419; it reads RVMEDIAAIFNKADKGNTGTLKKKDFNSVVKDICQR. Ca(2+)-binding residues include Asp397, Thr401, Thr403, and Asp408. Positions 573-582 match the Microbody targeting signal motif; sequence FVFGRDSSSI.

The protein belongs to the NADH dehydrogenase family. The cofactor is FAD. In terms of tissue distribution, expressed in seedlings, roots, cotyledons, stems, buds and flowers and, to a lower extent, in stems and leaves.

Its subcellular location is the mitochondrion inner membrane. The protein localises to the peroxisome. The enzyme catalyses a quinone + NADH + H(+) = a quinol + NAD(+). It catalyses the reaction a ubiquinone + NADH + H(+) = a ubiquinol + NAD(+). No effect of calcium ions on activity. Functionally, alternative NADH-ubiquinone oxidoreductase which catalyzes the oxidation of mitochondrial NADH does not translocate protons across the inner mitochondrial membrane. NAD(P)H dehydrogenase; more efficient on NADH. The chain is External alternative NAD(P)H-ubiquinone oxidoreductase B4, mitochondrial (NDB4) from Arabidopsis thaliana (Mouse-ear cress).